A 266-amino-acid chain; its full sequence is Autophagy protein 5 (266 aa).

K97 participates in a covalent cross-link: Glycyl lysine isopeptide (Lys-Gly) (interchain with G-Cter in atg12). The segment covering 158–179 has biased composition (low complexity); sequence SSSTPSSTPHPGSSGSSKAPST. A disordered region spans residues 158–182; it reads SSSTPSSTPHPGSSGSSKAPSTASP.

This sequence belongs to the ATG5 family. In terms of assembly, conjugated with atg12. Conjugated to atg12; which is essential for autophagy.

The protein localises to the preautophagosomal structure membrane. Functionally, involved in cytoplasm to vacuole transport (Cvt) and autophagic vesicle formation. Autophagy is essential for maintenance of amino acid levels and protein synthesis under nitrogen starvation. Required for selective autophagic degradation of the nucleus (nucleophagy). Also required for mitophagy, which eliminates defective or superfluous mitochondria in order to fulfill cellular energy requirements and prevent excess ROS production. Conjugation with atg12, through a ubiquitin-like conjugating system involving atg7 as an E1-like activating enzyme and atg10 as an E2-like conjugating enzyme, is essential for its function. The atg12-atg5 conjugate acts as an E3-like enzyme which is required for lipidation of atg8 and atg8 association to the vesicle membranes. The protein is Autophagy protein 5 (atg5) of Sclerotinia sclerotiorum (strain ATCC 18683 / 1980 / Ss-1) (White mold).